The following is a 358-amino-acid chain: Alanine racemase (358 aa).

The active-site Proton acceptor; specific for D-alanine is the Lys34. Lys34 bears the N6-(pyridoxal phosphate)lysine mark. Arg129 contacts substrate. Tyr254 serves as the catalytic Proton acceptor; specific for L-alanine. Residue Met302 coordinates substrate.

Belongs to the alanine racemase family. Pyridoxal 5'-phosphate serves as cofactor.

The catalysed reaction is L-alanine = D-alanine. It functions in the pathway amino-acid biosynthesis; D-alanine biosynthesis; D-alanine from L-alanine: step 1/1. Its function is as follows. Catalyzes the interconversion of L-alanine and D-alanine. May also act on other amino acids. This Hamiltonella defensa subsp. Acyrthosiphon pisum (strain 5AT) protein is Alanine racemase (alr).